Here is a 227-residue protein sequence, read N- to C-terminus: Cysteine-rich hydrophobic domain-containing protein 1 (227 aa).

The segment at 1–84 (MSILLPNMAE…PPRVVSEEHL (84 aa)) is disordered. Residues 13–23 (TISELEEEEEA) are compositionally biased toward acidic residues. A compositionally biased stretch (low complexity) spans 24–44 (ATSSSSPSSSPSSSSSSSVSG). The segment covering 45-72 (PDEDEEDEEEEEEEDEEEEDEEEEEEEV) has biased composition (acidic residues). A coiled-coil region spans residues 46–73 (DEDEEDEEEEEEEDEEEEDEEEEEEEVP).

Belongs to the CHIC family. Palmitoylated. As to expression, expressed moderately in the brain.

Its subcellular location is the cell membrane. The protein localises to the cytoplasmic vesicle. The protein is Cysteine-rich hydrophobic domain-containing protein 1 (Chic1) of Mus musculus (Mouse).